A 162-amino-acid polypeptide reads, in one-letter code: UPF0114 protein Sden_0436 (162 aa).

3 helical membrane passes run isoleucine 15–phenylalanine 35, leucine 53–valine 73, and isoleucine 136–leucine 156.

This sequence belongs to the UPF0114 family.

The protein localises to the cell membrane. The sequence is that of UPF0114 protein Sden_0436 from Shewanella denitrificans (strain OS217 / ATCC BAA-1090 / DSM 15013).